A 531-amino-acid polypeptide reads, in one-letter code: UDP-glucuronosyltransferase 1A6 (531 aa).

A signal peptide spans 1-26 (MACLLSAAQRASAGVLFVALWGTVLG). The N-linked (GlcNAc...) asparagine glycan is linked to Asn-294. Residues 489-505 (VIGFLLAIVLTVAFVTF) traverse the membrane as a helical segment.

This sequence belongs to the UDP-glycosyltransferase family.

Its subcellular location is the microsome. The protein resides in the endoplasmic reticulum membrane. It carries out the reaction glucuronate acceptor + UDP-alpha-D-glucuronate = acceptor beta-D-glucuronoside + UDP + H(+). The catalysed reaction is (5Z,8Z,11Z,14Z)-eicosatetraenoate + UDP-alpha-D-glucuronate = O-[(5Z),(8Z),(11Z),(14Z)-eicosatetraenoyl]-beta-D-glucuronate + UDP. It catalyses the reaction 15-hydroxy-(5Z,8Z,11Z,13E)-eicosatetraenoate + UDP-alpha-D-glucuronate = 15-O-(beta-D-glucuronosyl)-(5Z,8Z,11Z,14Z)-eicosatetraenoate + UDP + H(+). The enzyme catalyses (E)-ferulate + UDP-alpha-D-glucuronate = (E)-4-O-(beta-D-glucuronosyl)-ferulate + UDP + H(+). It carries out the reaction (E)-ferulate + UDP-alpha-D-glucuronate = (E)-ferulic acid beta-D-glucuronate ester + UDP. In terms of biological role, UDP-glucuronosyltransferase (UGT) that catalyzes phase II biotransformation reactions in which lipophilic substrates are conjugated with glucuronic acid to facilitate their inactivation and excretion from the body. Essential for the elimination and detoxification of drugs, xenobiotics and endogenous compounds. Involved in the glucuronidation of arachidonic acid (AA) and AA-derived eicosanoids including 15-HETE and 20-HETE. Conjugates small planar phenolic molecules such as 4-nitrophenol, 1-naphthol, and 4-methylumbelliferone. The bulky phenol 4-hydroxybiphenyl, androgens and estrogens are not substrates. 2-hydroxybiphenyl is an excellent substrate. Involved in the glucuronidation of the phytochemical ferulic acid at the phenolic or the carboxylic acid group. The polypeptide is UDP-glucuronosyltransferase 1A6 (UGT1) (Oryctolagus cuniculus (Rabbit)).